Reading from the N-terminus, the 219-residue chain is Acetylxylan esterase (219 aa).

Ser-15 functions as the Nucleophile in the catalytic mechanism. Catalysis depends on charge relay system residues Asp-191 and His-194.

Belongs to the 'GDSL' lipolytic enzyme family. As to quaternary structure, homooctamer, presenting a unique donut-shaped quaternary structure built of two staggered tetrameric rings. The eight active sites are organized in four closely situated pairs, which face the relatively wide internal cavity.

It localises to the cytoplasm. The enzyme catalyses Deacetylation of xylans and xylo-oligosaccharides.. The protein operates within glycan degradation; xylan degradation. In terms of biological role, acetylxylan esterase involved in the degradation of xylan, a major structural heterogeneous polysaccharide found in plant biomass representing the second most abundant polysaccharide in the biosphere, after cellulose. Cleaves acetyl side groups from the xylose backbone units of the hemicellulolytic polymer xylan and xylo-oligosaccharides. Hydrolyzes about 20%-30% of the available acetyl groups on fully acetylated birch wood xylan. Completely deacetylates xylobiose peracetate (fully acetylated), and is active on both the alpha- and beta-forms of the sugar. Also hydrolyzes fully acetylated methyl-beta-D-xylopyranoside and methyl-beta-D-glucopyranoside, and the synthetic substrates 2-naphthyl acetate, 4-nitrophenyl acetate, 4-methylumbelliferyl acetate, and phenyl acetate. This is Acetylxylan esterase from Geobacillus stearothermophilus (Bacillus stearothermophilus).